A 79-amino-acid polypeptide reads, in one-letter code: Acyl carrier protein (79 aa).

A Carrier domain is found at 2–77; sequence STIEERVKKI…QAIDYVKVHV (76 aa). S37 is modified (O-(pantetheine 4'-phosphoryl)serine).

Belongs to the acyl carrier protein (ACP) family. Post-translationally, 4'-phosphopantetheine is transferred from CoA to a specific serine of apo-ACP by AcpS. This modification is essential for activity because fatty acids are bound in thioester linkage to the sulfhydryl of the prosthetic group.

The protein resides in the cytoplasm. Its pathway is lipid metabolism; fatty acid biosynthesis. Functionally, carrier of the growing fatty acid chain in fatty acid biosynthesis. The protein is Acyl carrier protein of Xanthomonas albilineans.